The sequence spans 399 residues: S-adenosylmethionine synthase (399 aa).

H17 is an ATP binding site. D19 contacts Mg(2+). E45 is a binding site for K(+). 2 residues coordinate L-methionine: E58 and Q101. Residues 101 to 111 (QSADIAMGVDQ) form a flexible loop region. Residues 177 to 179 (DGK), 244 to 245 (RF), D253, 259 to 260 (RK), A276, and K280 contribute to the ATP site. D253 provides a ligand contact to L-methionine. K284 is a binding site for L-methionine.

Belongs to the AdoMet synthase family. Homotetramer; dimer of dimers. The cofactor is Mg(2+). It depends on K(+) as a cofactor.

It localises to the cytoplasm. It catalyses the reaction L-methionine + ATP + H2O = S-adenosyl-L-methionine + phosphate + diphosphate. Its pathway is amino-acid biosynthesis; S-adenosyl-L-methionine biosynthesis; S-adenosyl-L-methionine from L-methionine: step 1/1. Functionally, catalyzes the formation of S-adenosylmethionine (AdoMet) from methionine and ATP. The overall synthetic reaction is composed of two sequential steps, AdoMet formation and the subsequent tripolyphosphate hydrolysis which occurs prior to release of AdoMet from the enzyme. The protein is S-adenosylmethionine synthase of Bacillus thuringiensis (strain Al Hakam).